Here is a 152-residue protein sequence, read N- to C-terminus: Small ribosomal subunit protein bS6 (152 aa).

The tract at residues 96–152 (HEEGPSAMLQKRDRDDRGERGDRGDRGDRGDRGFGGREDRPRRPRPTEESHGGEEEV) is disordered.

This sequence belongs to the bacterial ribosomal protein bS6 family.

Functionally, binds together with bS18 to 16S ribosomal RNA. The sequence is that of Small ribosomal subunit protein bS6 from Xanthobacter autotrophicus (strain ATCC BAA-1158 / Py2).